Consider the following 675-residue polypeptide: DNA ligase (675 aa).

Residues 35–39 (DEAYD), 84–85 (SL), and E116 contribute to the NAD(+) site. K118 acts as the N6-AMP-lysine intermediate in catalysis. R139, E180, K296, and K320 together coordinate NAD(+). C414, C417, C432, and C437 together coordinate Zn(2+). In terms of domain architecture, BRCT spans 597–675 (PVDAFWNGKT…EREFLERLGM (79 aa)).

This sequence belongs to the NAD-dependent DNA ligase family. LigA subfamily. The cofactor is Mg(2+). Requires Mn(2+) as cofactor.

It catalyses the reaction NAD(+) + (deoxyribonucleotide)n-3'-hydroxyl + 5'-phospho-(deoxyribonucleotide)m = (deoxyribonucleotide)n+m + AMP + beta-nicotinamide D-nucleotide.. Its function is as follows. DNA ligase that catalyzes the formation of phosphodiester linkages between 5'-phosphoryl and 3'-hydroxyl groups in double-stranded DNA using NAD as a coenzyme and as the energy source for the reaction. It is essential for DNA replication and repair of damaged DNA. This chain is DNA ligase, found in Syntrophobacter fumaroxidans (strain DSM 10017 / MPOB).